A 323-amino-acid polypeptide reads, in one-letter code: C-type lectin domain family 11 member A (323 aa).

A signal peptide spans 1–21 (MQAAWLLGALVVPQLLGFGHG). Disordered regions lie at residues 55–106 (LGLP…TPED) and 272–295 (LGAQPSASPHPLSPDQPNGGTLEN). Positions 61–63 (RGD) match the Cell attachment site motif. Over residues 74-90 (EDWEMEEDQGEEEEEEA) the composition is skewed to acidic residues. The 138-residue stretch at 183–320 (LGHKCFLLSR…CQRRLYYVCE (138 aa)) folds into the C-type lectin domain. Cystine bridges form between Cys204–Cys319 and Cys296–Cys311.

Post-translationally, O-glycosylated. Probably sulfated on the O-glycans. In terms of tissue distribution, expressed in skeletal tissues including bone marrow, chondrocytes, primary ossification center-associated cells, the perichondrium and periosteum. Lower levels of expression were detected in spleen, thymus, appendix and fetal liver.

Its subcellular location is the cytoplasm. It is found in the secreted. Promotes osteogenesis by stimulating the differentiation of mesenchymal progenitors into mature osteoblasts. Important for repair and maintenance of adult bone. The sequence is that of C-type lectin domain family 11 member A (CLEC11A) from Homo sapiens (Human).